Reading from the N-terminus, the 510-residue chain is Protein ERGIC-53 (510 aa).

The signal sequence occupies residues 1-30 (MAGSRRRGLQARVRPLFCALLLSLSRFVGG). Residues 31 to 477 (DGVGGDPAAG…ELPPFPSCLS (447 aa)) are Lumenal-facing. The 224-residue stretch at 44–267 (RRFEYKYSFK…DVLSFLTFQL (224 aa)) folds into the L-type lectin-like domain. A carbohydrate-binding residues include S88 and D121. Residues D152, F154, and N156 each contribute to the Ca(2+) site. A carbohydrate-binding residues include N156 and H178. Ca(2+) is bound at residue D181. C190 and C230 form a disulfide bridge. 251–253 (GGL) lines the a carbohydrate pocket. Phosphoserine is present on S425. A helical transmembrane segment spans residues 478–498 (TVHFIIFVVVQTVLFIGYIMY). Residues 499 to 510 (RSQQEAAAKKFF) lie on the Cytoplasmic side of the membrane. The mediates interaction with RAB3GAP1, RAB3GAP2 and UBXN6 stretch occupies residues 499–510 (RSQQEAAAKKFF). An ER export motif motif is present at residues 509-510 (FF).

Exists both as a covalent disulfide-linked homohexamer, and a complex of three disulfide-linked dimers non-covalently kept together. Interacts with MCFD2. May interact with TMEM115. Interacts with RAB3GAP1 and RAB3GAP2. Interacts with UBXN6. Interacts with SERPINA1/alpha1-antitrypsin. Interacts with BET1.

It localises to the endoplasmic reticulum-Golgi intermediate compartment membrane. The protein localises to the golgi apparatus membrane. The protein resides in the endoplasmic reticulum membrane. Mannose-specific lectin. May recognize sugar residues of glycoproteins, glycolipids, or glycosylphosphatidyl inositol anchors and may be involved in the sorting or recycling of proteins, lipids, or both. The LMAN1-MCFD2 complex forms a specific cargo receptor for the ER-to-Golgi transport of selected proteins. This Chlorocebus aethiops (Green monkey) protein is Protein ERGIC-53 (LMAN1).